Here is a 693-residue protein sequence, read N- to C-terminus: Elongation factor G 1 (693 aa).

The 278-residue stretch at 4–281 (NKLRNIGISA…AVTRFLPSPH (278 aa)) folds into the tr-type G domain. GTP contacts are provided by residues 13–20 (AHIDSGKT), 80–84 (DTPGH), and 134–137 (NKCD).

It belongs to the TRAFAC class translation factor GTPase superfamily. Classic translation factor GTPase family. EF-G/EF-2 subfamily.

The protein localises to the cytoplasm. In terms of biological role, catalyzes the GTP-dependent ribosomal translocation step during translation elongation. During this step, the ribosome changes from the pre-translocational (PRE) to the post-translocational (POST) state as the newly formed A-site-bound peptidyl-tRNA and P-site-bound deacylated tRNA move to the P and E sites, respectively. Catalyzes the coordinated movement of the two tRNA molecules, the mRNA and conformational changes in the ribosome. This chain is Elongation factor G 1 (fusA), found in Borreliella burgdorferi (strain ATCC 35210 / DSM 4680 / CIP 102532 / B31) (Borrelia burgdorferi).